Consider the following 538-residue polypeptide: Efflux pump radE (538 aa).

3 stretches are compositionally biased toward basic and acidic residues: residues 1–12, 20–35, and 65–74; these read MATSRDFGREPP, EAGH…VSEH, and DPKEEERDPN. 2 disordered regions span residues 1–35 and 65–90; these read MATS…VSEH and DPKE…PQNW. The next 12 membrane-spanning stretches (helical) occupy residues 100–120, 134–154, 163–183, 194–214, 225–245, 253–273, 327–347, 362–382, 409–429, 436–456, 482–502, and 505–525; these read AVLS…APGI, LATF…LVLA, VVIY…CALS, FLCG…IADL, SVWS…GGFL, WIFW…LLVL, PICL…YFMI, EGIV…GVVV, IPPT…YGWT, WAVP…INIS, IFGA…GLGW, and SLLA…FYYG.

Belongs to the major facilitator superfamily.

It is found in the cell membrane. Functionally, efflux pump that might be required for efficient secretion of radicicol or other secondary metabolies produced by the radicicol gene cluster. The chain is Efflux pump radE from Floropilus chiversii (Chaetomium chiversii).